We begin with the raw amino-acid sequence, 753 residues long: 5-methyltetrahydropteroyltriglutamate--homocysteine methyltransferase (753 aa).

5-methyltetrahydropteroyltri-L-glutamate is bound by residues 17 to 20 and Lys117; that span reads RELK. Residues 431 to 433 and Glu484 contribute to the L-homocysteine site; that span reads IGS. L-methionine contacts are provided by residues 431–433 and Glu484; that span reads IGS. Residues 515–516 and Trp561 contribute to the 5-methyltetrahydropteroyltri-L-glutamate site; that span reads RC. An L-homocysteine-binding site is contributed by Asp599. Residue Asp599 coordinates L-methionine. 5-methyltetrahydropteroyltri-L-glutamate is bound at residue Glu605. Residues His641, Cys643, and Glu665 each contribute to the Zn(2+) site. His694 functions as the Proton donor in the catalytic mechanism. A Zn(2+)-binding site is contributed by Cys726.

This sequence belongs to the vitamin-B12 independent methionine synthase family. Zn(2+) is required as a cofactor.

It carries out the reaction 5-methyltetrahydropteroyltri-L-glutamate + L-homocysteine = tetrahydropteroyltri-L-glutamate + L-methionine. It participates in amino-acid biosynthesis; L-methionine biosynthesis via de novo pathway; L-methionine from L-homocysteine (MetE route): step 1/1. Its function is as follows. Catalyzes the transfer of a methyl group from 5-methyltetrahydrofolate to homocysteine resulting in methionine formation. This Shigella flexneri serotype 5b (strain 8401) protein is 5-methyltetrahydropteroyltriglutamate--homocysteine methyltransferase.